The primary structure comprises 137 residues: Small ribosomal subunit protein bS16 (137 aa).

2 stretches are compositionally biased toward basic and acidic residues: residues 80–99 and 111–125; these read KSPE…KRLQ and VATE…KEAP. The tract at residues 80-137 is disordered; that stretch reads KSPEEAQKGGMRKGEFKRLQAEQAAKAQKKAVATEEPKAEEAKEAPPAESQAAEGKEE. Low complexity predominate over residues 126–137; sequence PAESQAAEGKEE.

The protein belongs to the bacterial ribosomal protein bS16 family.

The polypeptide is Small ribosomal subunit protein bS16 (Coxiella burnetii (strain Dugway 5J108-111)).